The sequence spans 86 residues: RNA-binding protein Hfq (86 aa).

In terms of domain architecture, Sm spans 9–68 (DPYLNTLRKEKVPVSIYLVNGIKLQGQIESFDQFVVLLKNTVSQMVYKHAISTVVPARPV). The interval 66–86 (RPVRLPSPSDAEHGDSEPGNA) is disordered. Residues 75 to 86 (DAEHGDSEPGNA) show a composition bias toward basic and acidic residues.

It belongs to the Hfq family. As to quaternary structure, homohexamer.

In terms of biological role, RNA chaperone that binds small regulatory RNA (sRNAs) and mRNAs to facilitate mRNA translational regulation in response to envelope stress, environmental stress and changes in metabolite concentrations. Also binds with high specificity to tRNAs. In Pseudomonas entomophila (strain L48), this protein is RNA-binding protein Hfq.